The following is a 65-amino-acid chain: uncharacterized protein (65 aa).

This is an uncharacterized protein from Saccharolobus islandicus (Sulfolobus islandicus).